The following is a 186-amino-acid chain: Orotate phosphoribosyltransferase (186 aa).

5-phospho-alpha-D-ribose 1-diphosphate is bound by residues Arg93, Lys94, Lys97, His99, and 119-127 (EDVTTTGGS). Orotate-binding residues include Thr123 and Arg151.

The protein belongs to the purine/pyrimidine phosphoribosyltransferase family. PyrE subfamily. Homodimer. It depends on Mg(2+) as a cofactor.

It catalyses the reaction orotidine 5'-phosphate + diphosphate = orotate + 5-phospho-alpha-D-ribose 1-diphosphate. The protein operates within pyrimidine metabolism; UMP biosynthesis via de novo pathway; UMP from orotate: step 1/2. In terms of biological role, catalyzes the transfer of a ribosyl phosphate group from 5-phosphoribose 1-diphosphate to orotate, leading to the formation of orotidine monophosphate (OMP). This is Orotate phosphoribosyltransferase from Pyrococcus horikoshii (strain ATCC 700860 / DSM 12428 / JCM 9974 / NBRC 100139 / OT-3).